A 408-amino-acid chain; its full sequence is Phosphoglycerate kinase (408 aa).

Residues Asp28 to Asn30, Arg43, His66 to Arg69, Arg123, and Arg163 contribute to the substrate site. Residues Glu334 and Gly358–Thr361 each bind ATP.

The protein belongs to the phosphoglycerate kinase family. As to quaternary structure, monomer.

The protein resides in the cytoplasm. It carries out the reaction (2R)-3-phosphoglycerate + ATP = (2R)-3-phospho-glyceroyl phosphate + ADP. It functions in the pathway carbohydrate degradation; glycolysis; pyruvate from D-glyceraldehyde 3-phosphate: step 2/5. This chain is Phosphoglycerate kinase, found in Pyrobaculum aerophilum (strain ATCC 51768 / DSM 7523 / JCM 9630 / CIP 104966 / NBRC 100827 / IM2).